The following is a 1117-amino-acid chain: Protein rliB (1117 aa).

Positions 1–23 (MKNINNKILKIFILFLAICSVKS) are cleaved as a signal peptide. N-linked (GlcNAc...) asparagine glycosylation is found at Asn136, Asn195, Asn279, and Asn318. Residues 266–392 (STWSNNLVPQ…YHNSWTKLAS (127 aa)) enclose the G8 domain. PbH1 repeat units lie at residues 522–544 (VQKSYISDCVVTKSYYRCYTIHG) and 545–567 (TNNLTLTRNVAFDVNGHCYYLED). N-linked (GlcNAc...) asparagine glycans are attached at residues Asn547 and Asn605. Residues 621 to 642 (NAYNTIIGNSASGGWAGFSFPN) form a PbH1 3 repeat. N-linked (GlcNAc...) asparagine glycans are attached at residues Asn728, Asn845, Asn1030, Asn1044, Asn1091, and Asn1107.

Belongs to the comF family.

It is found in the secreted. This Dictyostelium discoideum (Social amoeba) protein is Protein rliB (rliB).